We begin with the raw amino-acid sequence, 205 residues long: Arginine exporter protein ArgO (205 aa).

Transmembrane regions (helical) follow at residues 1–21, 42–62, 67–87, 111–131, 147–167, and 185–205; these read MLAV…PLGP, LCAL…SALL, LLLA…GWGA, ILVT…DTFV, WFAL…AFLA, and LFVG…GFGL.

Belongs to the LysE/ArgO transporter (TC 2.A.75) family.

The protein localises to the cell inner membrane. It carries out the reaction L-arginine(in) = L-arginine(out). Its function is as follows. Involved in the export of arginine. Important to control the intracellular level of arginine and the correct balance between arginine and lysine. The chain is Arginine exporter protein ArgO from Yersinia pseudotuberculosis serotype O:3 (strain YPIII).